The chain runs to 162 residues: Probable chemoreceptor glutamine deamidase CheD (162 aa).

The protein belongs to the CheD family.

It catalyses the reaction L-glutaminyl-[protein] + H2O = L-glutamyl-[protein] + NH4(+). Functionally, probably deamidates glutamine residues to glutamate on methyl-accepting chemotaxis receptors (MCPs), playing an important role in chemotaxis. This chain is Probable chemoreceptor glutamine deamidase CheD, found in Clostridium botulinum (strain ATCC 19397 / Type A).